The primary structure comprises 380 residues: Tryptophan 2,3-dioxygenase (380 aa).

Substrate-binding positions include 57 to 61 (FIITH) and Arg128. His313 provides a ligand contact to heme. Thr328 provides a ligand contact to substrate.

Belongs to the tryptophan 2,3-dioxygenase family. As to quaternary structure, homotetramer. Dimer of dimers. Heme serves as cofactor.

The catalysed reaction is L-tryptophan + O2 = N-formyl-L-kynurenine. The protein operates within amino-acid degradation; L-tryptophan degradation via kynurenine pathway; L-kynurenine from L-tryptophan: step 1/2. It functions in the pathway pigment biosynthesis; ommochrome biosynthesis. Its function is as follows. Heme-dependent dioxygenase that catalyzes the oxidative cleavage of the L-tryptophan (L-Trp) pyrrole ring and converts L-tryptophan to N-formyl-L-kynurenine. Catalyzes the oxidative cleavage of the indole moiety. In Drosophila virilis (Fruit fly), this protein is Tryptophan 2,3-dioxygenase.